A 244-amino-acid polypeptide reads, in one-letter code: EEF1A lysine methyltransferase 2 (244 aa).

The interval 1–27 is disordered; it reads MNADAEGHSGAVVPAQSPEGSSAADDF. Ser-21 carries the post-translational modification Phosphoserine.

This sequence belongs to the class I-like SAM-binding methyltransferase superfamily. EFM4 family.

Its subcellular location is the cytoplasm. The protein resides in the nucleus. The enzyme catalyses L-lysyl-[protein] + 3 S-adenosyl-L-methionine = N(6),N(6),N(6)-trimethyl-L-lysyl-[protein] + 3 S-adenosyl-L-homocysteine + 3 H(+). Its function is as follows. Protein-lysine methyltransferase that selectively catalyzes the trimethylation of EEF1A at 'Lys-318'. This chain is EEF1A lysine methyltransferase 2, found in Mus musculus (Mouse).